The chain runs to 135 residues: Transcriptional activator protein (135 aa).

The Nuclear localization signal motif lies at 17–32 (KVQHKIAKKKPIRRKR). Residues 37 to 54 (CGCSYYLHLNCNNHGFTH) fold into a zinc finger. Polar residues-rich tracts occupy residues 77 to 87 (LFQDNRTQPEA) and 101 to 115 (IQPQ…SQMF). Residues 77-117 (LFQDNRTQPEAISNEPRHHFHSDKIQPQHQEGNGDSQMFSR) form a disordered region. The segment at 120–135 (NLDDITASDWSFLKSI) is transactivation.

The protein belongs to the geminiviridae transcriptional activator protein family. Monomer. Homodimer. Homooligomer. Self-interaction correlates with nuclear localization and efficient activation of transcription. Monomers suppress local silencing by interacting with and inactivating host adenosine kinase 2 (ADK2) in the cytoplasm. Interacts with and inhibits host SNF1 kinase. Binds to ssDNA. May interact with host RPS27A. In terms of processing, phosphorylated.

Its subcellular location is the host nucleus. It localises to the host cytoplasm. Its function is as follows. Multifunctional protein that modulates host antiviral defenses and promotes host attractiveness to insect vectors. Acts as a suppressor of RNA-mediated gene silencing, also known as post-transcriptional gene silencing (PTGS), a mechanism of plant viral defense that limits the accumulation of viral RNAs. TrAP suppresses the host RNA silencing by inhibiting adenosine kinase 2 (ADK2), a kinase involved in a general methylation pathway. Also suppresses the host basal defense by interacting with and inhibiting SNF1 kinase, a key regulator of cell metabolism implicated in innate antiviral defense. Functionally, inhibits signal transduction by the phytohormone jasmonate, making the infected plant more attractive to aphids, which are the second host to play a role as a dissemination vector. Acts by binding to ubiquitin precursor RPS27A, thereby preventing ubiquitin degradation of JAZ. This is Transcriptional activator protein from Tomato yellow leaf curl virus (strain Israel) (TYLCV).